Here is a 770-residue protein sequence, read N- to C-terminus: Lysine-specific histone demethylase 1 (770 aa).

The disordered stretch occupies residues 1–21 (MSSDTGSEYLDEEIRGDELGP). Positions 28–126 (LAAAASAARL…FGRYVRSTKI (99 aa)) constitute an SWIRM domain. 137–165 (VIVIGAGAAGISAATQLESFGFDVIVLEA) contacts FAD. Positions 718–739 (NEAVADIPNAPNAPNAQKPEEI) are disordered.

Belongs to the flavin monoamine oxidase family. As to quaternary structure, probably part of a large repressor complex. Interacts with CoREST protein spr-1. Interacts with chromobox protein homolog hpl-1. FAD serves as cofactor.

Its subcellular location is the nucleus. It catalyses the reaction N(6),N(6)-dimethyl-L-lysyl(4)-[histone H3] + 2 A + 2 H2O = L-lysyl(4)-[histone H3] + 2 formaldehyde + 2 AH2. Its function is as follows. Histone demethylase that specifically demethylates 'Lys-4' of histone H3, a specific tag for epigenetic transcriptional activation, thereby acting as a corepressor. Acts by oxidizing the substrate by FAD to generate the corresponding imine that is subsequently hydrolyzed. Demethylates both mono- and di-methylated 'Lys-4' of histone H3. May be involved in H3 demethylation in mitotic cells including gut and embryonic cells. Participates in the transcriptional repression of the presenilin protein hop-1. May act via the formation of a multiprotein complex that remodel or modify the chromatin. Together with met-2, set-17 and set-26, required for transgenerational fertility. Plays a role in developmental growth and lifespan regulation in response to ultraviolet-induced damage. In Caenorhabditis elegans, this protein is Lysine-specific histone demethylase 1.